Here is a 484-residue protein sequence, read N- to C-terminus: tRNA sulfurtransferase (484 aa).

In terms of domain architecture, THUMP spans 63-167; sequence QAFGERLACI…GDKLYMVTKR (105 aa). ATP-binding positions include 185-186, lysine 267, glycine 289, and glutamine 298; that span reads LI. A disulfide bridge connects residues cysteine 346 and cysteine 458. In terms of domain architecture, Rhodanese spans 406–484; that stretch reads IDTNEVVIDI…GYHNVKVYRP (79 aa). Residue cysteine 458 is the Cysteine persulfide intermediate of the active site.

Belongs to the ThiI family.

The protein resides in the cytoplasm. The catalysed reaction is [ThiI sulfur-carrier protein]-S-sulfanyl-L-cysteine + a uridine in tRNA + 2 reduced [2Fe-2S]-[ferredoxin] + ATP + H(+) = [ThiI sulfur-carrier protein]-L-cysteine + a 4-thiouridine in tRNA + 2 oxidized [2Fe-2S]-[ferredoxin] + AMP + diphosphate. It carries out the reaction [ThiS sulfur-carrier protein]-C-terminal Gly-Gly-AMP + S-sulfanyl-L-cysteinyl-[cysteine desulfurase] + AH2 = [ThiS sulfur-carrier protein]-C-terminal-Gly-aminoethanethioate + L-cysteinyl-[cysteine desulfurase] + A + AMP + 2 H(+). Its pathway is cofactor biosynthesis; thiamine diphosphate biosynthesis. Its function is as follows. Catalyzes the ATP-dependent transfer of a sulfur to tRNA to produce 4-thiouridine in position 8 of tRNAs, which functions as a near-UV photosensor. Also catalyzes the transfer of sulfur to the sulfur carrier protein ThiS, forming ThiS-thiocarboxylate. This is a step in the synthesis of thiazole, in the thiamine biosynthesis pathway. The sulfur is donated as persulfide by IscS. The polypeptide is tRNA sulfurtransferase (Shewanella sp. (strain MR-7)).